The sequence spans 418 residues: Type II methyltransferase M.MspI (418 aa).

The region spanning 105–404 is the SAM-dependent MTase C5-type domain; sequence FKFIDLFSGI…EQISLALKTV (300 aa). The active site involves Cys174.

The protein belongs to the class I-like SAM-binding methyltransferase superfamily. C5-methyltransferase family.

The enzyme catalyses a 2'-deoxycytidine in DNA + S-adenosyl-L-methionine = a 5-methyl-2'-deoxycytidine in DNA + S-adenosyl-L-homocysteine + H(+). In terms of biological role, a methylase, recognizes the double-stranded sequence 5'-CCGG-3', methylates C-1 on both strands, and protects the DNA from cleavage by the MspI endonuclease. The polypeptide is Type II methyltransferase M.MspI (mspIM) (Moraxella sp).